The following is a 264-amino-acid chain: ATP synthase subunit a (264 aa).

The next 6 membrane-spanning stretches (helical) occupy residues 29-49 (TWHI…LWIF), 87-107 (NALI…MNFM), 134-154 (DLNI…YYSI), 177-197 (IPVN…SLAL), 208-228 (LIFI…SLGV), and 235-255 (LIFH…LTIV).

Belongs to the ATPase A chain family. In terms of assembly, F-type ATPases have 2 components, CF(1) - the catalytic core - and CF(0) - the membrane proton channel. CF(1) has five subunits: alpha(3), beta(3), gamma(1), delta(1), epsilon(1). CF(0) has three main subunits: a(1), b(2) and c(9-12). The alpha and beta chains form an alternating ring which encloses part of the gamma chain. CF(1) is attached to CF(0) by a central stalk formed by the gamma and epsilon chains, while a peripheral stalk is formed by the delta and b chains.

The protein localises to the cell inner membrane. Functionally, key component of the proton channel; it plays a direct role in the translocation of protons across the membrane. The sequence is that of ATP synthase subunit a from Shewanella amazonensis (strain ATCC BAA-1098 / SB2B).